Reading from the N-terminus, the 550-residue chain is Glucose import ATP-binding protein TsgD13 (550 aa).

ABC transporter domains are found at residues 7 to 270 and 287 to 533; these read LRME…VGRE and LRAR…TGGG. Position 39–46 (39–46) interacts with ATP; that stretch reads GENGAGKS. Residues 529–550 are disordered; sequence MTGGGDATATAGAQVRGLGGSS.

Belongs to the ABC transporter superfamily. The complex is composed of two ATP-binding proteins (TsgD13), two transmembrane proteins (TsgB13 and TsgC13) and a solute-binding protein (TsgA13).

The protein localises to the cell membrane. It catalyses the reaction D-glucose(out) + ATP + H2O = D-glucose(in) + ADP + phosphate + H(+). Functionally, part of an ABC transporter complex involved in glucose import. Responsible for energy coupling to the transport system. The sequence is that of Glucose import ATP-binding protein TsgD13 (tsgD13) from Haloferax volcanii (strain ATCC 29605 / DSM 3757 / JCM 8879 / NBRC 14742 / NCIMB 2012 / VKM B-1768 / DS2) (Halobacterium volcanii).